Consider the following 246-residue polypeptide: MNESQPKLKYKRILLKFSGEALMGKSQFGIDPSVLDSLARDIAELIHMGVEVGLVLGGGNLFRGKALSQAGVGRVTGDHMGMLATVMNALALRDALERIDLPARIMSAIPMLGVVDPYHRRKAITHLRNGQVVIFAAGTGNPFFTTDTAACLRAIEIGADIVLKATKVDGVYSADPLKNSDAKRYDYLTYKEVLTKGLEVMDSTAICLCQDQGMPLQVFDMAAPKALKRIVTGERVGTIVGANHDQ.

ATP is bound at residue 16–19; it reads KFSG. Gly58 serves as a coordination point for UMP. 2 residues coordinate ATP: Gly59 and Arg63. Residues Asp78 and 139 to 146 each bind UMP; that span reads TGNPFFTT. ATP-binding residues include Thr166, Tyr172, and Asp175.

This sequence belongs to the UMP kinase family. Homohexamer.

Its subcellular location is the cytoplasm. The enzyme catalyses UMP + ATP = UDP + ADP. Its pathway is pyrimidine metabolism; CTP biosynthesis via de novo pathway; UDP from UMP (UMPK route): step 1/1. With respect to regulation, inhibited by UTP. Functionally, catalyzes the reversible phosphorylation of UMP to UDP. The chain is Uridylate kinase from Legionella pneumophila (strain Corby).